Reading from the N-terminus, the 177-residue chain is Olfactory protein (177 aa).

An N-terminal signal peptide occupies residues 1-17 (MIRIIAIVVLFFLQCQA). The cysteines at positions 81 and 174 are disulfide-linked.

Belongs to the calycin superfamily. Lipocalin family. As to expression, synthesized in Bowman glands, which secrete the mucus that bathes the cilia of the olfactory neuroepithelium.

The protein resides in the secreted. This Lithobates pipiens (Northern leopard frog) protein is Olfactory protein.